We begin with the raw amino-acid sequence, 621 residues long: MCGIIGYVGEGSCRDVLINGLDKLSYRGYDSAGIAFIKNSKINVVRSKGRIEKLKEKINDNFQKFEIGNIGIGHTRWATHGEPTEINAHPHLDAEGQFAVVQNGVIENYVQLKNYLTVNGTYFLSDTDAEVIPHLIAYKQKHLKLQIVEAILCALSELKGNFSTVIIARDMPDSIFVYQNKTALTLGKGSNFYSVSSDPIALIPYTKNFIQLHDRELGIISISQLAIYNKGKFTYPSRRFKANLNDLITNKASFDSYTLKEIHDQKKVLRNLIISTLQSEKSIDESGQLHLEYKKIKNFQIIACGSSFNAALVGKVILEKLIRIPVHVYYGSEFKTNLPPLLPCTLTIAVSQSGETGDMLSAIEIEKSRRKFQNTVYKPYLLSITNKNYSSITKKTAQSIDLKAGIEIGVAATKTFTAQTLSFYLLALKLAEHKFTLRKKEINKHLDEIRNLPKAIAHLLIKDESSIKWLSKQLKEISKCFYIGKGLNLGSALEGALKLKEISYIHCDGYAAGEIKHGPIALVENNTLIITITDPEQSQESTFASSQEAKARGAVLLAITHIEDSSIYQTFDFIIKIPKISQICASITSSVSLQLFAYYMAYYKGNDIDKPRNLAKSVTVE.

Cys2 functions as the Nucleophile; for GATase activity in the catalytic mechanism. The Glutamine amidotransferase type-2 domain maps to 2-223 (CGIIGYVGEG…DRELGIISIS (222 aa)). SIS domains lie at 289–436 (LHLE…HKFT) and 470–611 (LSKQ…IDKP). The For Fru-6P isomerization activity role is filled by Lys616.

In terms of assembly, homodimer.

Its subcellular location is the plastid. The protein localises to the chloroplast. It carries out the reaction D-fructose 6-phosphate + L-glutamine = D-glucosamine 6-phosphate + L-glutamate. Catalyzes the first step in hexosamine metabolism, converting fructose-6P into glucosamine-6P using glutamine as a nitrogen source. In Cyanidium caldarium (Red alga), this protein is Glutamine--fructose-6-phosphate aminotransferase [isomerizing].